The primary structure comprises 121 residues: Large ribosomal subunit protein uL14 (121 aa).

It belongs to the universal ribosomal protein uL14 family. In terms of assembly, part of the 50S ribosomal subunit. Forms a cluster with proteins L3 and L19. In the 70S ribosome, L14 and L19 interact and together make contacts with the 16S rRNA in bridges B5 and B8.

Binds to 23S rRNA. Forms part of two intersubunit bridges in the 70S ribosome. The polypeptide is Large ribosomal subunit protein uL14 (Azobacteroides pseudotrichonymphae genomovar. CFP2).